A 411-amino-acid chain; its full sequence is Serpin A3-1 (411 aa).

Residues 1 to 24 (MRAERTSFLLALGLLVAGIRSVHC) form the signal peptide. N-linked (GlcNAc...) asparagine glycans are attached at residues Asn-100, Asn-180, Asn-230, and Asn-264.

Belongs to the serpin family. Homodimer. In terms of processing, N-glycosylated. As to expression, detected in all tissues examined (at protein level). Abundantly expressed in liver, kidney and spleen. Lowest levels were observed in diaphragm muscle.

The protein localises to the cytoplasmic vesicle. Its subcellular location is the secretory vesicle. It localises to the chromaffin granule. It is found in the secreted. Functionally, potent inhibitor of the serine proteases elastase and trypsin. Moderately inhibits the serine proteases plasmin and chymotrypsin, and the thiol protease proenkephalin-processing enzyme. Does not inhibit the serine proteases cathepsin G, furin, kallikrein, thrombin, tissue plasminogen activator and urokinase, or the cysteine proteases cathepsin B, cathepsin L and papain. The protein is Serpin A3-1 of Bos taurus (Bovine).